The primary structure comprises 467 residues: Dihydrolipoyl dehydrogenase (467 aa).

FAD is bound by residues 33–41 (EPKYWGGIC), lysine 50, and glycine 113. Residues cysteine 41 and cysteine 46 are joined by a disulfide bond. NAD(+) is bound by residues 181–185 (GAGAI), glutamate 204, and 269–272 (AIGF). The FAD site is built by aspartate 312 and alanine 320. Histidine 446 serves as the catalytic Proton acceptor.

The protein belongs to the class-I pyridine nucleotide-disulfide oxidoreductase family. As to quaternary structure, homodimer. Part of the PDH complex, consisting of multiple copies of AceE (E1), DlaT (E2) and Lpd (E3), and of the BCKADH complex, consisting of multiple copies of BkdA/BkdB (E1), BkdC (E2) and Lpd (E3). FAD serves as cofactor.

It is found in the cytoplasm. The catalysed reaction is N(6)-[(R)-dihydrolipoyl]-L-lysyl-[protein] + NAD(+) = N(6)-[(R)-lipoyl]-L-lysyl-[protein] + NADH + H(+). Its function is as follows. Lipoamide dehydrogenase is a component of the alpha-ketoacid dehydrogenase complexes. Catalyzes the reoxidation of dihydrolipoyl groups which are covalently attached to the lipoate acyltransferase components (E2) of the complexes. The chain is Dihydrolipoyl dehydrogenase (lpd) from Mycobacterium leprae (strain TN).